The following is a 93-amino-acid chain: Large ribosomal subunit protein uL23cz/uL23cy (93 aa).

The protein belongs to the universal ribosomal protein uL23 family. In terms of assembly, part of the 50S ribosomal subunit.

The protein localises to the plastid. Its subcellular location is the chloroplast. Binds to 23S rRNA. The protein is Large ribosomal subunit protein uL23cz/uL23cy (rpl23-A) of Arabidopsis thaliana (Mouse-ear cress).